The following is a 72-amino-acid chain: Translation initiation factor IF-1 (72 aa).

In terms of domain architecture, S1-like spans 1–72 (MSKDDVIEMQ…TRGRITWRAK (72 aa)).

Belongs to the IF-1 family. In terms of assembly, component of the 30S ribosomal translation pre-initiation complex which assembles on the 30S ribosome in the order IF-2 and IF-3, IF-1 and N-formylmethionyl-tRNA(fMet); mRNA recruitment can occur at any time during PIC assembly.

Its subcellular location is the cytoplasm. Its function is as follows. One of the essential components for the initiation of protein synthesis. Stabilizes the binding of IF-2 and IF-3 on the 30S subunit to which N-formylmethionyl-tRNA(fMet) subsequently binds. Helps modulate mRNA selection, yielding the 30S pre-initiation complex (PIC). Upon addition of the 50S ribosomal subunit IF-1, IF-2 and IF-3 are released leaving the mature 70S translation initiation complex. The protein is Translation initiation factor IF-1 of Clostridium kluyveri (strain ATCC 8527 / DSM 555 / NBRC 12016 / NCIMB 10680 / K1).